We begin with the raw amino-acid sequence, 693 residues long: Methionine--tRNA ligase (693 aa).

Positions proline 12–histidine 22 match the 'HIGH' region motif. Zn(2+) contacts are provided by cysteine 143, cysteine 146, cysteine 156, and cysteine 159. The 'KMSKS' region signature appears at lysine 330–serine 334. Residue lysine 333 participates in ATP binding. The tract at residues alanine 557–glutamate 576 is disordered. The region spanning aspartate 590–arginine 693 is the tRNA-binding domain.

This sequence belongs to the class-I aminoacyl-tRNA synthetase family. MetG type 1 subfamily. Homodimer. Zn(2+) is required as a cofactor.

It is found in the cytoplasm. The enzyme catalyses tRNA(Met) + L-methionine + ATP = L-methionyl-tRNA(Met) + AMP + diphosphate. Functionally, is required not only for elongation of protein synthesis but also for the initiation of all mRNA translation through initiator tRNA(fMet) aminoacylation. The sequence is that of Methionine--tRNA ligase from Stenotrophomonas maltophilia (strain R551-3).